We begin with the raw amino-acid sequence, 534 residues long: Autophagic-related protein 16.2 (534 aa).

WD repeat units lie at residues 243 to 281 (THDG…TDAS), 288 to 329 (GCLG…STFS), 330 to 368 (GHTD…CLKS), 371 to 411 (VGST…ATYS), 413 to 452 (ELGQ…IIHL), 459 to 498 (KTSC…LEKV), and 504 to 534 (SDSA…TLWR).

This sequence belongs to the WD repeat tipD family. Homodimer (via N-terminus). Most likely a component of a complex at least containing atg-5, lgg-3, atg-16.1 and/or atg-16.2. Interacts (via N-terminus) with atg-16.1 (via N-terminus). Interacts (via N-terminus) with atg-5. Interacts (via WD 5-6 repeats) with lgg-2; the interaction is direct. As to expression, expressed in neurons, pharyngeal muscles, body wall muscle cells and intestinal cells.

It is found in the cytoplasm. Its subcellular location is the cell membrane. Its function is as follows. Most likely a component of the atg-5-atg-12-atg-16.1/atg-16.2 complex, which is recruited to the preautophagosomal membrane and associates with lgg-2 to promote autophagosome formation. Plays a role in the recruitment of lipidated lgg-1 probably to the autophagosome membrane to promote autophagosome formation. Furthermore, association with atg-5 is required for the nucleation of lgg-1 positive autophagosomes. Although its role in autophagosome formation may be distinct to the role of atg-16.2, it functions in a partially redundant manner with atg-16.1 to regulate autophagic processes. In a daf-18/PTEN- and daf-16/FOXO-dependent manner, required for maintaining the numbers of germ stem cell progenitors in the gonad during the late phases of larval development. In Caenorhabditis elegans, this protein is Autophagic-related protein 16.2.